Reading from the N-terminus, the 281-residue chain is Diaminopimelate epimerase (281 aa).

2 residues coordinate substrate: asparagine 13 and asparagine 66. Cysteine 75 acts as the Proton donor in catalysis. Substrate is bound by residues 76–77 (GN), asparagine 164, asparagine 197, and 215–216 (ER). Catalysis depends on cysteine 224, which acts as the Proton acceptor. 225 to 226 (GT) lines the substrate pocket.

This sequence belongs to the diaminopimelate epimerase family. As to quaternary structure, homodimer.

The protein localises to the cytoplasm. It catalyses the reaction (2S,6S)-2,6-diaminopimelate = meso-2,6-diaminopimelate. The protein operates within amino-acid biosynthesis; L-lysine biosynthesis via DAP pathway; DL-2,6-diaminopimelate from LL-2,6-diaminopimelate: step 1/1. Functionally, catalyzes the stereoinversion of LL-2,6-diaminopimelate (L,L-DAP) to meso-diaminopimelate (meso-DAP), a precursor of L-lysine and an essential component of the bacterial peptidoglycan. The polypeptide is Diaminopimelate epimerase (Rippkaea orientalis (strain PCC 8801 / RF-1) (Cyanothece sp. (strain PCC 8801))).